A 159-amino-acid polypeptide reads, in one-letter code: Transcriptional repressor NrdR (159 aa).

The segment at C3 to C34 is a zinc-finger region. One can recognise an ATP-cone domain in the interval P49–E139.

This sequence belongs to the NrdR family. The cofactor is Zn(2+).

Functionally, negatively regulates transcription of bacterial ribonucleotide reductase nrd genes and operons by binding to NrdR-boxes. The chain is Transcriptional repressor NrdR from Burkholderia cenocepacia (strain ATCC BAA-245 / DSM 16553 / LMG 16656 / NCTC 13227 / J2315 / CF5610) (Burkholderia cepacia (strain J2315)).